Consider the following 635-residue polypeptide: 1-deoxy-D-xylulose-5-phosphate synthase (635 aa).

Residues histidine 77 and glycine 118 to alanine 120 each bind thiamine diphosphate. Aspartate 149 lines the Mg(2+) pocket. Thiamine diphosphate-binding positions include glycine 150–serine 151, asparagine 178, phenylalanine 290, and glutamate 375. Asparagine 178 provides a ligand contact to Mg(2+).

Belongs to the transketolase family. DXPS subfamily. As to quaternary structure, homodimer. Mg(2+) is required as a cofactor. Thiamine diphosphate serves as cofactor.

It carries out the reaction D-glyceraldehyde 3-phosphate + pyruvate + H(+) = 1-deoxy-D-xylulose 5-phosphate + CO2. Its pathway is metabolic intermediate biosynthesis; 1-deoxy-D-xylulose 5-phosphate biosynthesis; 1-deoxy-D-xylulose 5-phosphate from D-glyceraldehyde 3-phosphate and pyruvate: step 1/1. In terms of biological role, catalyzes the acyloin condensation reaction between C atoms 2 and 3 of pyruvate and glyceraldehyde 3-phosphate to yield 1-deoxy-D-xylulose-5-phosphate (DXP). This Chlorobium phaeovibrioides (strain DSM 265 / 1930) (Prosthecochloris vibrioformis (strain DSM 265)) protein is 1-deoxy-D-xylulose-5-phosphate synthase.